Reading from the N-terminus, the 202-residue chain is Recombination protein RecR (202 aa).

The segment at 56–71 adopts a C4-type zinc-finger fold; sequence CVVCGTVSDGELCRIC. Positions 79-179 constitute a Toprim domain; it reads TMICVVEEPK…TVTRLASGLP (101 aa).

It belongs to the RecR family.

May play a role in DNA repair. It seems to be involved in an RecBC-independent recombinational process of DNA repair. It may act with RecF and RecO. The protein is Recombination protein RecR of Nocardia farcinica (strain IFM 10152).